Reading from the N-terminus, the 267-residue chain is Type II pantothenate kinase (267 aa).

Residue 6–13 (DAGGTLIK) coordinates ATP. The active-site Proton acceptor is E70. ATP-binding positions include T99, 121 to 125 (GGMIQ), Y137, and S225.

This sequence belongs to the type II pantothenate kinase family. As to quaternary structure, homodimer.

It localises to the cytoplasm. The enzyme catalyses (R)-pantothenate + ATP = (R)-4'-phosphopantothenate + ADP + H(+). It participates in cofactor biosynthesis; coenzyme A biosynthesis; CoA from (R)-pantothenate: step 1/5. Its function is as follows. Catalyzes the phosphorylation of pantothenate (Pan), the first step in CoA biosynthesis. This is Type II pantothenate kinase from Staphylococcus aureus (strain Mu50 / ATCC 700699).